The primary structure comprises 493 residues: CBL-interacting protein kinase 26 (493 aa).

A Protein kinase domain is found at 12-266; that stretch reads YEIGRQLGQG…IPKIKRSAWY (255 aa). Residues 18–26 and Lys41 each bind ATP; that span reads LGQGNFAKV. Catalysis depends on Asp134, which acts as the Proton acceptor. Residues 152-181 form an activation loop region; that stretch reads DFGLSALSESKRHDGLLHTTCGTPAYVAPE. The disordered stretch occupies residues 311-332; it reads KVYTNGEATTSDSPECSNSDGK. Residues 316–332 show a composition bias toward polar residues; it reads GEATTSDSPECSNSDGK. One can recognise an NAF domain in the interval 320 to 360; that stretch reads TSDSPECSNSDGKQASLSLPNLNAFDIISLSTGFDLSNLFE. Positions 365 to 394 are PPI; that stretch reads RREERFTTRQPAAAIFAKLNELARRFKLKI. A disordered region spans residues 465 to 493; that stretch reads GQHQQPEQSMQGMQGEQQPSRLPSQQPQG.

The protein belongs to the protein kinase superfamily. CAMK Ser/Thr protein kinase family. SNF1 subfamily. Mn(2+) is required as a cofactor.

The catalysed reaction is L-seryl-[protein] + ATP = O-phospho-L-seryl-[protein] + ADP + H(+). It carries out the reaction L-threonyl-[protein] + ATP = O-phospho-L-threonyl-[protein] + ADP + H(+). CIPK serine-threonine protein kinases interact with CBL proteins. Binding of a CBL protein to the regulatory NAF domain of CIPK protein lead to the activation of the kinase in a calcium-dependent manner. This Oryza sativa subsp. japonica (Rice) protein is CBL-interacting protein kinase 26 (CIPK26).